The primary structure comprises 439 residues: Dolichyl-diphosphooligosaccharide--protein glycosyltransferase 48 kDa subunit (439 aa).

A signal peptide spans 1–26; sequence MATRAARVWSGWWLLLLPLLGLAGAS. Residues 27–409 lie on the Lumenal side of the membrane; the sequence is GPRTLVLLDN…QYERFIPSAY (383 aa). Residues 410–430 traverse the membrane as a helical segment; it reads PYYASAFSMMLGLFIFSVVFL. Over 431 to 439 the chain is Cytoplasmic; the sequence is HMKEKEKSD.

It belongs to the DDOST 48 kDa subunit family. In terms of assembly, component of the oligosaccharyltransferase (OST) complex. OST exists in two different complex forms which contain common core subunits RPN1, RPN2, OST48, OST4, DAD1 and TMEM258, either STT3A or STT3B as catalytic subunits, and form-specific accessory subunits. STT3A complex assembly occurs through the formation of 3 subcomplexes. Subcomplex 1 contains RPN1 and TMEM258, subcomplex 2 contains the STT3A-specific subunits STT3A, DC2/OSTC, and KCP2 as well as the core subunit OST4, and subcomplex 3 contains RPN2, DAD1, and OST48. The STT3A complex can form stable complexes with the Sec61 complex or with both the Sec61 and TRAP complexes. Interacts with SMIM22.

Its subcellular location is the endoplasmic reticulum membrane. Its pathway is protein modification; protein glycosylation. In terms of biological role, subunit of the oligosaccharyl transferase (OST) complex that catalyzes the initial transfer of a defined glycan (Glc(3)Man(9)GlcNAc(2) in eukaryotes) from the lipid carrier dolichol-pyrophosphate to an asparagine residue within an Asn-X-Ser/Thr consensus motif in nascent polypeptide chains, the first step in protein N-glycosylation. N-glycosylation occurs cotranslationally and the complex associates with the Sec61 complex at the channel-forming translocon complex that mediates protein translocation across the endoplasmic reticulum (ER). All subunits are required for a maximal enzyme activity. Required for the assembly of both SST3A- and SS3B-containing OST complexes. This chain is Dolichyl-diphosphooligosaccharide--protein glycosyltransferase 48 kDa subunit, found in Bos taurus (Bovine).